The chain runs to 359 residues: Nicotinate-nucleotide--dimethylbenzimidazole phosphoribosyltransferase (359 aa).

Glutamate 318 functions as the Proton acceptor in the catalytic mechanism.

This sequence belongs to the CobT family. As to quaternary structure, homodimer.

The catalysed reaction is 5,6-dimethylbenzimidazole + nicotinate beta-D-ribonucleotide = alpha-ribazole 5'-phosphate + nicotinate + H(+). It functions in the pathway nucleoside biosynthesis; alpha-ribazole biosynthesis; alpha-ribazole from 5,6-dimethylbenzimidazole: step 1/2. In terms of biological role, catalyzes the synthesis of alpha-ribazole-5'-phosphate from nicotinate mononucleotide (NAMN) and 5,6-dimethylbenzimidazole (DMB). The sequence is that of Nicotinate-nucleotide--dimethylbenzimidazole phosphoribosyltransferase from Escherichia coli O157:H7.